Reading from the N-terminus, the 1090-residue chain is Nitrogen assimilation transcription factor nit-4 (1090 aa).

A compositionally biased stretch (polar residues) spans 1–14 (MNSSDVQMMSSQDA). The segment at 1-43 (MNSSDVQMMSSQDAPGSAGLAPDNIASSLPSKKKSRRGADPTN) is disordered. The segment at residues 53–81 (CIACRRRKSKCDGALPSCAACASVYGTEC) is a DNA-binding region (zn(2)-C6 fungal-type). 6 disordered regions span residues 145-176 (RRDE…SQAV), 666-689 (FSTS…PAPP), 773-798 (HQHH…YQQQ), 825-875 (GIPT…VKPP), 936-999 (QGWD…QRQQ), and 1033-1053 (HGAE…TTVG). Positions 167-176 (GRDDATSQAV) are enriched in basic and acidic residues. Residues 666–677 (FSTSEVPSPNRT) are compositionally biased toward polar residues. Residues 849–859 (QPQQQQQPQAQ) are compositionally biased toward low complexity. Composition is skewed to gly residues over residues 940–965 (LEGG…GGAG) and 976–988 (NIGG…GGST). The span at 990 to 999 (QRQQQQQRQQ) shows a compositional bias: low complexity.

Its subcellular location is the nucleus. Functionally, pathway-specific regulatory gene of nitrate assimilation; it activates the transcription of the genes for nitrate and nitrite reductases. This is Nitrogen assimilation transcription factor nit-4 (nit-4) from Neurospora crassa (strain ATCC 24698 / 74-OR23-1A / CBS 708.71 / DSM 1257 / FGSC 987).